The chain runs to 1157 residues: ATP-dependent helicase/deoxyribonuclease subunit B (1157 aa).

Residues 1–275 (MTLHAYLGRA…QYFNQLYRFN (275 aa)) enclose the UvrD-like helicase ATP-binding domain. 8–15 (GRAGTGKS) contributes to the ATP binding site. Residues 269–583 (NQLYRFNNQD…SIGTMDLAKV (315 aa)) form the UvrD-like helicase C-terminal domain. The [4Fe-4S] cluster site is built by cysteine 784, cysteine 1112, cysteine 1115, and cysteine 1121.

Belongs to the helicase family. AddB/RexB type 1 subfamily. As to quaternary structure, heterodimer of AddA and AddB. Mg(2+) serves as cofactor. [4Fe-4S] cluster is required as a cofactor.

In terms of biological role, the heterodimer acts as both an ATP-dependent DNA helicase and an ATP-dependent, dual-direction single-stranded exonuclease. Recognizes the chi site generating a DNA molecule suitable for the initiation of homologous recombination. The AddB subunit has 5' -&gt; 3' nuclease activity but not helicase activity. The chain is ATP-dependent helicase/deoxyribonuclease subunit B from Staphylococcus aureus (strain JH9).